Consider the following 178-residue polypeptide: Protein modigliani (178 aa).

As to quaternary structure, probably homodimerizes. Component of the MTV complex, composed of moi/modigliani, tea and ver/verrocchio. Interacts with ver/verrochio and tea (via C-terminus); the interactions are direct and require fully intact moi/modigliani and ver/verrocchio. The MTV complex is recruited to telomeres by the HipHop-HOAP complex, consisting of HipHop, cav/HOAP and Su(var)205/HP1 to form the terminin telomere-capping complex. Interacts with cav/HOAP and Su(var)205/HP1; the interactions are direct. Probably interacts with peo (via N-terminus and UBC domain).

The protein localises to the nucleus. It localises to the chromosome. It is found in the telomere. Functionally, part of the MTV complex that associates with the HipHop-HOAP complex to form the terminin telomere-capping complex involved in telomere maintenance and prevention of telomere fusion. Potentially functions downstream of mei-41/ATR. As part of the MTV complex binds single stranded DNA in a sequence-independent manner, protecting it from degradation. The sequence is that of Protein modigliani from Drosophila melanogaster (Fruit fly).